A 792-amino-acid chain; its full sequence is Serine/threonine-protein kinase Nek4 (792 aa).

Residues 6 to 261 enclose the Protein kinase domain; that stretch reads YCYMRVVGRG…VRSILRQPYI (256 aa). Residues 12-20 and K35 contribute to the ATP site; that span reads VGRGSYGEV. D131 serves as the catalytic Proton acceptor. T165 carries the phosphothreonine; by autocatalysis modification. Disordered regions lie at residues 329–358, 379–515, 527–611, and 628–657; these read QEKPVDIGPLRSPASLEGHTGKQDMNNTGE, ANAG…LPSY, QQND…SITQ, and LSEDELSSSTSSTDKSDGDSREGKSHTNEM. Phosphoserine occurs at positions 340 and 343. 5 stretches are compositionally biased toward polar residues: residues 412-421, 456-467, 473-484, 496-505, and 541-551; these read QGNTKSSDQP, DQVTGIIENQDS, QPHSSMSEPSLS, AHSGTKSQFQ, and VNSSRTSSTAS. K566 carries the N6-methyllysine modification. Residues 602–611 show a composition bias toward polar residues; sequence RFSSDCSITQ. Positions 641-657 are enriched in basic and acidic residues; sequence DKSDGDSREGKSHTNEM. Position 675 is a phosphoserine (S675).

It belongs to the protein kinase superfamily. NEK Ser/Thr protein kinase family. NIMA subfamily. The cofactor is Mn(2+). As to expression, expressed ubiquitously among various organs and is up-regulated in the testis.

It is found in the cytoplasm. It localises to the cell projection. The protein resides in the cilium. It carries out the reaction L-seryl-[protein] + ATP = O-phospho-L-seryl-[protein] + ADP + H(+). The catalysed reaction is L-threonyl-[protein] + ATP = O-phospho-L-threonyl-[protein] + ADP + H(+). Required for normal entry into proliferative arrest after a limited number of cell divisions, also called replicative senescence. Required for normal cell cycle arrest in response to double-stranded DNA damage. Protein kinase that seems to act exclusively upon threonine residues. In Mus musculus (Mouse), this protein is Serine/threonine-protein kinase Nek4 (Nek4).